The sequence spans 183 residues: Adenine phosphoribosyltransferase (183 aa).

It belongs to the purine/pyrimidine phosphoribosyltransferase family. In terms of assembly, homodimer.

It localises to the cytoplasm. It carries out the reaction AMP + diphosphate = 5-phospho-alpha-D-ribose 1-diphosphate + adenine. The protein operates within purine metabolism; AMP biosynthesis via salvage pathway; AMP from adenine: step 1/1. Catalyzes a salvage reaction resulting in the formation of AMP, that is energically less costly than de novo synthesis. The protein is Adenine phosphoribosyltransferase of Sodalis glossinidius (strain morsitans).